Here is a 49-residue protein sequence, read N- to C-terminus: Glutathione peroxidase (49 aa).

This sequence belongs to the glutathione peroxidase family.

It carries out the reaction 2 glutathione + H2O2 = glutathione disulfide + 2 H2O. Its activity is regulated as follows. Inhibited by Cu(2+), SDS and DTT. Activity is slightly increased by Fe(2+), Mn(2+), triton X-100 and EDTA. Functionally, glutathione peroxidase which may protect the cell from oxidative damage. The polypeptide is Glutathione peroxidase (Lactiplantibacillus plantarum (Lactobacillus plantarum)).